Here is a 382-residue protein sequence, read N- to C-terminus: Flap endonuclease 1-A (382 aa).

Residues 1–104 form an N-domain region; sequence MGIHGLAKLI…GELAKRSERR (104 aa). Aspartate 34 provides a ligand contact to Mg(2+). The DNA site is built by arginine 47 and arginine 70. Positions 86, 158, 160, 179, and 181 each coordinate Mg(2+). Residues 122–253 are I-domain; sequence NIEKFTKRLV…KRAIDLIRQH (132 aa). Residue glutamate 158 coordinates DNA. DNA contacts are provided by glycine 231 and aspartate 233. Aspartate 233 is a binding site for Mg(2+). Residues 336-344 are interaction with PCNA; that stretch reads TQGRLDDFF. Positions 350–382 are disordered; that stretch reads VSSTKRKEAESKGSAKKKAKTGGTPAGKFKRGK.

Belongs to the XPG/RAD2 endonuclease family. FEN1 subfamily. Interacts with PCNA. Three molecules of fen1 bind to one PCNA trimer with each molecule binding to one PCNA monomer. PCNA stimulates the nuclease activity without altering cleavage specificity. Requires Mg(2+) as cofactor. Phosphorylated. Phosphorylation upon DNA damage induces relocalization to the nuclear plasma.

The protein localises to the nucleus. It localises to the nucleolus. The protein resides in the nucleoplasm. Its subcellular location is the mitochondrion. Its function is as follows. Structure-specific nuclease with 5'-flap endonuclease and 5'-3' exonuclease activities involved in DNA replication and repair. During DNA replication, cleaves the 5'-overhanging flap structure that is generated by displacement synthesis when DNA polymerase encounters the 5'-end of a downstream Okazaki fragment. It enters the flap from the 5'-end and then tracks to cleave the flap base, leaving a nick for ligation. Also involved in the long patch base excision repair (LP-BER) pathway, by cleaving within the apurinic/apyrimidinic (AP) site-terminated flap. Acts as a genome stabilization factor that prevents flaps from equilibrating into structures that lead to duplications and deletions. Also possesses 5'-3' exonuclease activity on nicked or gapped double-stranded DNA, and exhibits RNase H activity. Also involved in replication and repair of rDNA and in repairing mitochondrial DNA. The protein is Flap endonuclease 1-A (fen1-a) of Xenopus laevis (African clawed frog).